Here is a 244-residue protein sequence, read N- to C-terminus: MSIEIVQKSLFNIIEAVADAVTASQATKRCRLVAVSKTKSADLIEACYSQNQRHFGENYVQELEEKSDVLASKCLDIRWHFIGQVQSNKIGKICNSPGLWCVETVETEKHARIFDKEWSKHGANLSPLRVLVQVNTSGEDNKGGIEIGEAPKLAEFIRKECQNLKFDGFMTIGSFDNSHASGENPDFEKLFKVRQTWAEQTGESADSVELSMGMSDDFLQAIHQGATSVRVGSKLFGAREYKNK.

Lys-37 carries the N6-(pyridoxal phosphate)lysine modification.

The protein belongs to the pyridoxal phosphate-binding protein YggS/PROSC family.

Pyridoxal 5'-phosphate (PLP)-binding protein, which may be involved in intracellular homeostatic regulation of pyridoxal 5'-phosphate (PLP), the active form of vitamin B6. The protein is Pyridoxal phosphate homeostasis protein of Caenorhabditis elegans.